We begin with the raw amino-acid sequence, 7570 residues long: Dystonin (7570 aa).

2 consecutive Calponin-homology (CH) domains span residues 35-138 (KVQK…LHFQ) and 151-255 (MSAK…DAFP). An actin-binding region spans residues 35–252 (KVQKKTFTKW…VITYVSSLYD (218 aa)). Leucine 135, lysine 184, serine 236, and serine 237 each carry phosphoserine. 2 Spectrin repeats span residues 602–699 (EINM…RHLD) and 701–802 (LHNF…QHIK). The SH3 domain maps to 887-944 (KTSIPIKAICDYRQIEITIYKDDECVLANNSHRAKWKVISPTGNEAMVPSVCFTVPPP). 2 Spectrin repeats span residues 1293 to 1422 (KYYR…KFAG) and 1440 to 1540 (KEHV…QESQ). Serine 1382 bears the Phosphoserine mark. The Nuclear localization signal; in isoform 6 signature appears at 1383–1389 (PVKRRRM). Glutamate 1565 is modified (phosphoserine). Plectin repeat units lie at residues 1584 to 1626 (IRLL…QLKE), 1660 to 1703 (KVLE…LERQ), 1774 to 1817 (RLLS…LTYQ), 1818 to 1855 (VQTG…LEAQ), and 1856 to 1891 (RGYV…KILN). Residue serine 2229 is modified to Phosphoserine. Disordered regions lie at residues 2317–2346 (SNTS…IEEY), 2383–2441 (LLND…DETA), and 2585–2616 (DYIY…GKPR). The segment covering 2336–2345 (DKEDESEIEE) has biased composition (acidic residues). Residues 2385–2394 (NDQQNNTGTD) are compositionally biased toward low complexity. Composition is skewed to acidic residues over residues 2395 to 2412 (TDSD…DDDH), 2430 to 2439 (YDTLQEENDE), and 2591 to 2605 (NDQD…DEEG). Serine 2919 carries the post-translational modification Phosphoserine. The tract at residues 3190-3221 (EASTVPSDSQMSDSSGVSPMTNSSELKPESRD) is disordered. Positions 3192 to 3209 (STVPSDSQMSDSSGVSPM) are enriched in low complexity. Spectrin repeat units lie at residues 3395-3501 (LQHT…KQIM), 3643-3752 (QEYK…KELD), 3926-4040 (EKFD…NNLK), 4047-4153 (QHYE…EKLQ), 4160-4259 (LSVQ…ETLA), 4269-4368 (ELFE…EAVT), 4516-4621 (QKAQ…QKLE), 4628-4732 (TQFQ…DWID), 4742-4842 (QSLL…QHLQ), 4849-4951 (HQFQ…NKLK), 4958-5058 (LKYK…FCLE), 5068-5167 (QEVS…SFLE), 5174-5277 (GHFQ…EQVE), 5284-5388 (EEFY…AQLQ), 5395-5497 (GRFQ…RQLE), 5504-5715 (QQFH…KTLE), 5831-5933 (QQFD…LQLE), 5941-6041 (QFWE…VALD), 6048-6154 (TQFH…AKLL), 6161-6263 (EKFW…DKLE), 6270-6373 (VQYQ…HKLE), 6380-6482 (GQFQ…QQLD), 6489-6591 (KGFH…TKLE), 6598-6700 (MEFH…RSLD), 6707-6810 (KQFH…NKLE), 6817-6918 (GQFT…TRLE), 6925-7027 (EEFH…QRLA), and 7037-7167 (QELL…RKLN). A Phosphoserine modification is found at serine 3968. Serine 4749 carries the post-translational modification Phosphoserine. Lysine 5470 participates in a covalent cross-link: Glycyl lysine isopeptide (Lys-Gly) (interchain with G-Cter in ubiquitin). EF-hand domains are found at residues 7197–7232 (HKKS…SKFP) and 7233–7268 (TSRL…NKDA). Residues aspartate 7210, aspartate 7212, aspartate 7214, lysine 7216, glutamate 7221, aspartate 7246, aspartate 7248, aspartate 7250, tyrosine 7252, and glutamate 7257 each contribute to the Ca(2+) site. One can recognise a GAR domain in the interval 7273–7351 (TDADKIEDEV…EFLVKNDPCR (79 aa)). Disordered regions lie at residues 7358–7379 (KMLR…AKGR), 7395–7452 (SQGM…SKLR), and 7481–7570 (QFAD…SSKR). The segment covering 7362 to 7374 (SESNSSITTTQPT) has biased composition (polar residues). Low complexity-rich tracts occupy residues 7411 to 7441 (SSRG…TTTP) and 7490 to 7504 (SRPG…GSRA). Serine 7432 carries the post-translational modification Phosphoserine. Serine 7510, serine 7513, and serine 7525 each carry phosphoserine. Positions 7519-7535 (EIQSVCSDVETVPQTHR) are enriched in polar residues. The short motif at 7550-7553 (SKIP) is the Microtubule tip localization signal element.

Homodimer. Isoform 1 interacts (via N-terminus) with PLEC (via N-terminus). Interacts with the neuronal intermediate filament protein, PRPH. Interacts with DES. Interacts with SYNE3. Isoform 1 and isoform 6 can homodimerize (via N-terminus). Isoform 1 interacts (via N-terminus) with ACTN2. Isoform 1 interacts (via N-terminus) with PLEC (via N-terminus). Isoform 3 interacts (via N-terminus) with COL17A1 (via cytoplasmic region). Isoform 3 interacts (via N-terminus) with ITGB4 isoform beta-4a (via cytoplasmic region). Isoform 3 interacts (via N-terminus) with ERBIN (via C-terminus). Isoform 3 associates (via C-terminal) with KRT5-KRT14 (via rod region) intermediate filaments of keratins. Interacts with MAPRE1; probably required for targeting to the growing microtubule plus ends. Interacts with TMIGD2. Isoform 9 interacts with TMEM108. Isoform 1 is expressed in myoblasts (at protein level). Isoform 3 is expressed in the skin. Isoform 6 is expressed in the brain. Highly expressed in skeletal muscle and cultured keratinocytes.

The protein resides in the cytoplasm. The protein localises to the cytoskeleton. Its subcellular location is the stress fiber. It is found in the cell projection. It localises to the axon. The protein resides in the myofibril. The protein localises to the sarcomere. Its subcellular location is the z line. It is found in the h zone. It localises to the cell junction. The protein resides in the hemidesmosome. The protein localises to the nucleus. Its subcellular location is the nucleus envelope. It is found in the membrane. It localises to the endoplasmic reticulum membrane. The protein resides in the cell cortex. The protein localises to the cell membrane. Cytoskeletal linker protein. Acts as an integrator of intermediate filaments, actin and microtubule cytoskeleton networks. Required for anchoring either intermediate filaments to the actin cytoskeleton in neural and muscle cells or keratin-containing intermediate filaments to hemidesmosomes in epithelial cells. The proteins may self-aggregate to form filaments or a two-dimensional mesh. Regulates the organization and stability of the microtubule network of sensory neurons to allow axonal transport. Mediates docking of the dynein/dynactin motor complex to vesicle cargos for retrograde axonal transport through its interaction with TMEM108 and DCTN1. In terms of biological role, plays a structural role in the assembly of hemidesmosomes of epithelial cells; anchors keratin-containing intermediate filaments to the inner plaque of hemidesmosomes. Required for the regulation of keratinocyte polarity and motility; mediates integrin ITGB4 regulation of RAC1 activity. Its function is as follows. Required for bundling actin filaments around the nucleus. Functionally, regulates the organization and stability of the microtubule network of sensory neurons to allow axonal transport. The chain is Dystonin from Homo sapiens (Human).